A 62-amino-acid chain; its full sequence is Photosystem II reaction center protein Z (62 aa).

2 helical membrane-spanning segments follow: residues 8-28 (FLIA…VAYA) and 41-61 (YVGS…NFLV).

It belongs to the PsbZ family. As to quaternary structure, PSII is composed of 1 copy each of membrane proteins PsbA, PsbB, PsbC, PsbD, PsbE, PsbF, PsbH, PsbI, PsbJ, PsbK, PsbL, PsbM, PsbT, PsbX, PsbY, PsbZ, Psb30/Ycf12, peripheral proteins PsbO, CyanoQ (PsbQ), PsbU, PsbV and a large number of cofactors. It forms dimeric complexes.

The protein resides in the cellular thylakoid membrane. Its function is as follows. May control the interaction of photosystem II (PSII) cores with the light-harvesting antenna, regulates electron flow through the 2 photosystem reaction centers. PSII is a light-driven water plastoquinone oxidoreductase, using light energy to abstract electrons from H(2)O, generating a proton gradient subsequently used for ATP formation. The protein is Photosystem II reaction center protein Z of Microcystis aeruginosa (strain NIES-843 / IAM M-2473).